Here is a 449-residue protein sequence, read N- to C-terminus: Chromosomal replication initiator protein DnaA (449 aa).

The tract at residues 1 to 83 is domain I, interacts with DnaA modulators; that stretch reads MDDSLWSACL…VELEIGSPPT (83 aa). Positions 77–114 are disordered; the sequence is EIGSPPTPDQREAATGATRAAPAQRSSEPRQRPVDSNL. Residues 83–112 form a domain II region; sequence TPDQREAATGATRAAPAQRSSEPRQRPVDS. Positions 89 to 99 are enriched in low complexity; it reads AATGATRAAPA. Residues 113–329 form a domain III, AAA+ region region; that stretch reads NLNPGFTFDS…GALRRITANA (217 aa). ATP is bound by residues Gly-157, Gly-159, Lys-160, and Thr-161. Residues 330 to 449 are domain IV, binds dsDNA; the sequence is QFTGRAIDVD…YDNLLRTLST (120 aa).

It belongs to the DnaA family. Oligomerizes as a right-handed, spiral filament on DNA at oriC.

It localises to the cytoplasm. Functionally, plays an essential role in the initiation and regulation of chromosomal replication. ATP-DnaA binds to the origin of replication (oriC) to initiate formation of the DNA replication initiation complex once per cell cycle. Binds the DnaA box (a 9 base pair repeat at the origin) and separates the double-stranded (ds)DNA. Forms a right-handed helical filament on oriC DNA; dsDNA binds to the exterior of the filament while single-stranded (ss)DNA is stabiized in the filament's interior. The ATP-DnaA-oriC complex binds and stabilizes one strand of the AT-rich DNA unwinding element (DUE), permitting loading of DNA polymerase. After initiation quickly degrades to an ADP-DnaA complex that is not apt for DNA replication. Binds acidic phospholipids. The protein is Chromosomal replication initiator protein DnaA of Halorhodospira halophila (strain DSM 244 / SL1) (Ectothiorhodospira halophila (strain DSM 244 / SL1)).